The sequence spans 1153 residues: Cytosolic carboxypeptidase 1 (1153 aa).

Positions 357–400 are disordered; it reads NQPPGVDDVVDESDENEATEVDTENDTENEEDDTGHKTQNDDIE. Over residues 364–389 the composition is skewed to acidic residues; that stretch reads DVVDESDENEATEVDTENDTENEEDD. Residues 774 to 1063 form the Peptidase M14 domain; the sequence is YPYTYSMLKM…QFCLALLRLR (290 aa). Residues His-845, Glu-848, and His-942 each contribute to the Zn(2+) site. The active-site Proton donor/acceptor is the Glu-1027. The span at 1108–1128 shows a compositional bias: acidic residues; the sequence is AFLEEVDYSAESNDENDPELE. Residues 1108-1153 form a disordered region; the sequence is AFLEEVDYSAESNDENDPELEPDLRDNHALPDPSSDSELSHQDSLT. Residues 1141–1153 show a composition bias toward polar residues; sequence SSDSELSHQDSLT.

Belongs to the peptidase M14 family. It depends on Zn(2+) as a cofactor.

The protein resides in the cytoplasm. It localises to the cytosol. It is found in the nucleus. The protein localises to the mitochondrion. It catalyses the reaction (L-glutamyl)(n+1)-gamma-L-glutamyl-L-glutamyl-[protein] + H2O = (L-glutamyl)(n)-gamma-L-glutamyl-L-glutamyl-[protein] + L-glutamate. It carries out the reaction C-terminal L-alpha-aminoacyl-L-glutamyl-L-glutamyl-[tubulin] + H2O = C-terminal L-alpha-aminoacyl-L-glutamyl-[tubulin] + L-glutamate. In terms of biological role, metallocarboxypeptidase that mediates protein deglutamylation of tubulin and non-tubulin target proteins. Catalyzes the removal of polyglutamate side chains present on the gamma-carboxyl group of glutamate residues within the C-terminal tail of alpha- and beta-tubulin. Specifically cleaves tubulin long-side-chains, while it is not able to remove the branching point glutamate. Also catalyzes the removal of polyglutamate residues from the carboxy-terminus of alpha-tubulin as well as non-tubulin proteins. The protein is Cytosolic carboxypeptidase 1 (agtpbp1) of Danio rerio (Zebrafish).